We begin with the raw amino-acid sequence, 268 residues long: UPF0328 protein ECU05_1640/ECU11_0090 (268 aa).

This sequence belongs to the UPF0328 family.

The sequence is that of UPF0328 protein ECU05_1640/ECU11_0090 from Encephalitozoon cuniculi (strain GB-M1) (Microsporidian parasite).